Consider the following 307-residue polypeptide: Ribulose bisphosphate carboxylase/oxygenase activase, chloroplastic (307 aa).

A chloroplast-targeting transit peptide spans methionine 1–alanine 46. Glycine 73–threonine 80 lines the ATP pocket.

This sequence belongs to the CbxX/CfxQ family. In terms of assembly, forms homooligomers. Forms heterohexameric rings with the plastid-encoded Rca subunit consisting of 3 of each nuclear- and plastidial-encoded subunits that alternate in the ring.

The protein localises to the plastid. It localises to the chloroplast. In terms of biological role, required for the expression of ribulose 1,5-bisphosphate carboxylase/oxygenase (RuBisCo). ATPase involved in the activation of red-type RuBisCo, which tends to form inactive complexes with its substrate ribulose 1,5-bisphosphate (RuBP). Catalyzes the release of RuBP from inhibited RuBisCo in an ATP-dependent manner. Activation of RuBisCO involves the ATP-dependent carboxylation of the epsilon-amino group of lysine leading to a carbamate structure. The nuclear-encoded subunit plays a more critical role in activase function than the plastidial-encoded subunit. This is Ribulose bisphosphate carboxylase/oxygenase activase, chloroplastic from Cyanidioschyzon merolae (strain NIES-3377 / 10D) (Unicellular red alga).